The following is a 45-amino-acid chain: RDCTSQSHKFVGLCLSDRNCASVCLTEYFTGGKCDHRRCVCTKGC.

4 cysteine pairs are disulfide-bonded: cysteine 3-cysteine 45, cysteine 14-cysteine 34, cysteine 20-cysteine 39, and cysteine 24-cysteine 41.

In terms of biological role, plant defense peptide. The sequence is that of Defensin Tk-AMP-D4 from Triticum kiharae (Wheat).